The primary structure comprises 498 residues: MRINPTTSGPGVSTLEEKNLGSIAQIIGPVLDVAFPPGKMPNIYNALVVKGRDTVGQQINVTCEVQQLLGNNRVRAVAMSATDGLMRGMEVIDTGAPLSVPVGGATLGRIFNVLGEPVDNLGPVDTRTTSPIHRSAPAFIQLDTKLSIFETGIKVVDLLAPYRRGGKIGLFGGAGVGKTVLIMELINNIAKAHGGVSVFGGVGERTREGNDLYMEMKESGVINEQNIAESKVALVYGQMNEPPGARMRVGLTALTMAEYFRDVNEQDVLLFIDNIFRFVQAGSEVSALLGRMPSAVGYQPTLSTEMGSLQERITSTKEGSITSIQAVYVPADDLTDPAPATTFAHLDATTVLSRGLAAKGIYPAVDPLDSTSTMLQPRIVGEEHYETAQRVKQTSQRYKELQDIIAILGLDELSEEDRLTVARARKIERFLSQPFFVAEVFTGSPGKYVGLAETIRGFQLILSGELDGLPEQAFYLVGNIDEATAKAMNLEVESXLKK.

An ATP-binding site is contributed by 172 to 179 (GGAGVGKT).

This sequence belongs to the ATPase alpha/beta chains family. As to quaternary structure, F-type ATPases have 2 components, CF(1) - the catalytic core - and CF(0) - the membrane proton channel. CF(1) has five subunits: alpha(3), beta(3), gamma(1), delta(1), epsilon(1). CF(0) has four main subunits: a(1), b(1), b'(1) and c(9-12).

It is found in the plastid. The protein localises to the chloroplast thylakoid membrane. It carries out the reaction ATP + H2O + 4 H(+)(in) = ADP + phosphate + 5 H(+)(out). Produces ATP from ADP in the presence of a proton gradient across the membrane. The catalytic sites are hosted primarily by the beta subunits. This Myristica fragrans (Nutmeg) protein is ATP synthase subunit beta, chloroplastic.